An 890-amino-acid chain; its full sequence is Protein translocase subunit SecA (890 aa).

ATP is bound by residues Gln86, 104 to 108 (GEGKT), and Asp493. Over residues 851 to 872 (EASHGDGDAKKAPVVKKEESGR) the composition is skewed to basic and acidic residues. The interval 851–873 (EASHGDGDAKKAPVVKKEESGRN) is disordered. Residues Cys876, Cys878, Cys887, and Cys888 each contribute to the Zn(2+) site.

Belongs to the SecA family. In terms of assembly, monomer and homodimer. Part of the essential Sec protein translocation apparatus which comprises SecA, SecYEG and auxiliary proteins SecDF. Other proteins may also be involved. Zn(2+) is required as a cofactor.

The protein resides in the cell membrane. It localises to the cytoplasm. It catalyses the reaction ATP + H2O + cellular proteinSide 1 = ADP + phosphate + cellular proteinSide 2.. In terms of biological role, part of the Sec protein translocase complex. Interacts with the SecYEG preprotein conducting channel. Has a central role in coupling the hydrolysis of ATP to the transfer of proteins into and across the cell membrane, serving as an ATP-driven molecular motor driving the stepwise translocation of polypeptide chains across the membrane. The chain is Protein translocase subunit SecA from Alkaliphilus oremlandii (strain OhILAs) (Clostridium oremlandii (strain OhILAs)).